Consider the following 531-residue polypeptide: Chaperonin GroEL, chloroplastic (531 aa).

ATP contacts are provided by residues Thr-30–Pro-33, Asp-87–Thr-91, Gly-415, Asn-481–Ala-483, and Asp-497.

The protein belongs to the chaperonin (HSP60) family. As to quaternary structure, forms a cylinder of 14 subunits composed of two heptameric rings stacked back-to-back. Interacts with the co-chaperonin GroES.

It localises to the plastid. The protein localises to the chloroplast. The enzyme catalyses ATP + H2O + a folded polypeptide = ADP + phosphate + an unfolded polypeptide.. Functionally, together with its co-chaperonin GroES, plays an essential role in assisting protein folding. The GroEL-GroES system forms a nano-cage that allows encapsulation of the non-native substrate proteins and provides a physical environment optimized to promote and accelerate protein folding. The sequence is that of Chaperonin GroEL, chloroplastic from Emiliania huxleyi (Coccolithophore).